Consider the following 220-residue polypeptide: Tumor protein D54 (220 aa).

An N-acetylmethionine modification is found at methionine 1. Residues serine 3, serine 12, and serine 19 each carry the phosphoserine modification. The stretch at 40–82 (GLTEGEEEELRAELAKVEEEIVTLRQVLAAKERHCGELKRRLG) forms a coiled coil. Residues serine 96, serine 149, serine 168, and serine 175 each carry the phosphoserine modification. Threonine 177 carries the post-translational modification Phosphothreonine. Serine 180 is modified (phosphoserine). Position 187 is a phosphothreonine (threonine 187). The disordered stretch occupies residues 189 to 220 (KSKVVGGRENGSDNLPPSPGSGDQTLPDHAPF). Phosphoserine is present on residues serine 206 and serine 209.

This sequence belongs to the TPD52 family. In terms of assembly, forms a homodimer or heterodimer with other members of the family. Interacts with MAL2.

This Mus musculus (Mouse) protein is Tumor protein D54 (Tpd52l2).